Here is a 150-residue protein sequence, read N- to C-terminus: Lipoprotein signal peptidase (150 aa).

Helical transmembrane passes span 58–78 and 85–107; these read FFII…FKST and SFSL…GYVV. Catalysis depends on residues D108 and D122. Residues 117–137 form a helical membrane-spanning segment; that stretch reads VFNLADFFITGGVLLLTFLIL.

Belongs to the peptidase A8 family.

Its subcellular location is the cell membrane. The catalysed reaction is Release of signal peptides from bacterial membrane prolipoproteins. Hydrolyzes -Xaa-Yaa-Zaa-|-(S,diacylglyceryl)Cys-, in which Xaa is hydrophobic (preferably Leu), and Yaa (Ala or Ser) and Zaa (Gly or Ala) have small, neutral side chains.. It participates in protein modification; lipoprotein biosynthesis (signal peptide cleavage). In terms of biological role, this protein specifically catalyzes the removal of signal peptides from prolipoproteins. The polypeptide is Lipoprotein signal peptidase (Caldicellulosiruptor bescii (strain ATCC BAA-1888 / DSM 6725 / KCTC 15123 / Z-1320) (Anaerocellum thermophilum)).